Reading from the N-terminus, the 488-residue chain is MELIREARPHGREKLRANLIEWFHWLLREAELYDVRYPVKGAYVWRPYGMRLRRHVEELIRRSHDETGHQEVLFPVFIPYEFFGKESQHIRGFEKEVFWVSKGGEEGERLVLRPTSETAIMPMVKLWVHDYKDLPLRLYQIVSVFRAETKMTHPMIRLREISMFKEAHTVHVDREDAERQVREAVEIYKKIFDEMCLAYMINKRPDWDKFAGAEYTIAFDTVLPDGRTLQIGTVHYLGTNFTRVFEVTYLAADGTRRLAHTTSYGISERSIAAMLITHGDDAGTVLPPRLAPIQVVIVPIFYGEEEAASVISYAREVEKALREAGMRVHIDDRPDKTPGWKFYFWELKGVPLRVEVGKRDLEKRQVVITRRDTLEKYAVGLGELVDAVRGLMRTVEENLRRRAWEELRSRIVRAETVEAAKAAIREGKVVEVPWSGDNDCGIKLKDLVGADALGVPLDSDASVGGFDLRDLACGEKRAEFWLRLSERY.

The protein belongs to the class-II aminoacyl-tRNA synthetase family. ProS type 3 subfamily. As to quaternary structure, homodimer.

It is found in the cytoplasm. The catalysed reaction is tRNA(Pro) + L-proline + ATP = L-prolyl-tRNA(Pro) + AMP + diphosphate. Functionally, catalyzes the attachment of proline to tRNA(Pro) in a two-step reaction: proline is first activated by ATP to form Pro-AMP and then transferred to the acceptor end of tRNA(Pro). In Pyrobaculum arsenaticum (strain DSM 13514 / JCM 11321 / PZ6), this protein is Proline--tRNA ligase.